The following is a 467-amino-acid chain: Cysteine--tRNA ligase (467 aa).

Cys-29 is a binding site for Zn(2+). The short motif at 31-41 (PTVYDDSHLGH) is the 'HIGH' region element. A disordered region spans residues 155–174 (KLSGRGEDLEQVSRIESSEE). Positions 158–174 (GRGEDLEQVSRIESSEE) are enriched in basic and acidic residues. Zn(2+)-binding residues include Cys-210, His-239, and Glu-243. The 'KMSKS' region motif lies at 271-275 (KMSKS). Residue Lys-274 coordinates ATP.

It belongs to the class-I aminoacyl-tRNA synthetase family. In terms of assembly, monomer. Zn(2+) serves as cofactor.

The protein localises to the cytoplasm. The enzyme catalyses tRNA(Cys) + L-cysteine + ATP = L-cysteinyl-tRNA(Cys) + AMP + diphosphate. In Wolinella succinogenes (strain ATCC 29543 / DSM 1740 / CCUG 13145 / JCM 31913 / LMG 7466 / NCTC 11488 / FDC 602W) (Vibrio succinogenes), this protein is Cysteine--tRNA ligase.